Reading from the N-terminus, the 442-residue chain is tRNA modification GTPase MnmE (442 aa).

The (6S)-5-formyl-5,6,7,8-tetrahydrofolate site is built by arginine 21, glutamate 79, and lysine 118. Residues 214–367 (GFKIAIVGKP…LKEELQNYLN (154 aa)) form the TrmE-type G domain. K(+) is bound at residue asparagine 224. Residues 224 to 229 (NVGKSS), 243 to 249 (SDIAGTT), and 268 to 271 (DTAG) contribute to the GTP site. Serine 228 provides a ligand contact to Mg(2+). K(+) contacts are provided by serine 243, isoleucine 245, and threonine 248. Position 249 (threonine 249) interacts with Mg(2+). Lysine 442 is a binding site for (6S)-5-formyl-5,6,7,8-tetrahydrofolate.

The protein belongs to the TRAFAC class TrmE-Era-EngA-EngB-Septin-like GTPase superfamily. TrmE GTPase family. As to quaternary structure, homodimer. Heterotetramer of two MnmE and two MnmG subunits. K(+) is required as a cofactor.

It is found in the cytoplasm. Its function is as follows. Exhibits a very high intrinsic GTPase hydrolysis rate. Involved in the addition of a carboxymethylaminomethyl (cmnm) group at the wobble position (U34) of certain tRNAs, forming tRNA-cmnm(5)s(2)U34. This is tRNA modification GTPase MnmE from Campylobacter jejuni subsp. jejuni serotype O:2 (strain ATCC 700819 / NCTC 11168).